A 337-amino-acid chain; its full sequence is GTP 3',8-cyclase (337 aa).

In terms of domain architecture, Radical SAM core spans 17–243; that stretch reads PFQRQYYYLR…HKSHTDGPAK (227 aa). GTP is bound at residue Arg26. Cys33 and Cys37 together coordinate [4Fe-4S] cluster. Tyr39 lines the S-adenosyl-L-methionine pocket. Cys40 lines the [4Fe-4S] cluster pocket. Arg76 contacts GTP. Gly80 contributes to the S-adenosyl-L-methionine binding site. Position 107 (Thr107) interacts with GTP. Position 131 (Ser131) interacts with S-adenosyl-L-methionine. Lys168 serves as a coordination point for GTP. Met202 is an S-adenosyl-L-methionine binding site. [4Fe-4S] cluster-binding residues include Cys265 and Cys268. A GTP-binding site is contributed by 270-272; sequence RLR. Cys282 provides a ligand contact to [4Fe-4S] cluster.

This sequence belongs to the radical SAM superfamily. MoaA family. Monomer and homodimer. [4Fe-4S] cluster is required as a cofactor.

It catalyses the reaction GTP + AH2 + S-adenosyl-L-methionine = (8S)-3',8-cyclo-7,8-dihydroguanosine 5'-triphosphate + 5'-deoxyadenosine + L-methionine + A + H(+). It functions in the pathway cofactor biosynthesis; molybdopterin biosynthesis. Its function is as follows. Catalyzes the cyclization of GTP to (8S)-3',8-cyclo-7,8-dihydroguanosine 5'-triphosphate. This chain is GTP 3',8-cyclase, found in Haemophilus influenzae (strain ATCC 51907 / DSM 11121 / KW20 / Rd).